Consider the following 1594-residue polypeptide: RB1-inducible coiled-coil protein 1 (1594 aa).

Phosphoserine is present on residues serine 222, serine 229, and serine 237. Residue threonine 238 is modified to Phosphothreonine. Serine 243, serine 253, serine 257, serine 261, and serine 266 each carry phosphoserine. Positions 566–569 (KPRK) match the Nuclear localization signal motif. Serine 624, serine 647, serine 650, serine 652, serine 653, serine 734, serine 1091, serine 1222, serine 1370, and serine 1484 each carry phosphoserine. A disordered region spans residues 638-673 (EQKASVSQTSPQSASSPRMESTAGITTTTSPRTPPP). Low complexity predominate over residues 641–654 (ASVSQTSPQSASSP). Positions 731-737 (DFMSAVN) match the FFAT motif. Coiled-coil stretches lie at residues 859–1397 (LKEK…SSSF) and 1438–1485 (METS…SQSM).

Belongs to the ATG17 family. Part of a complex consisting of ATG13/KIAA0652, ULK1 and RB1CC1. This complex associates with ATG101. Interacts with PTK2/FAK1 and PTK2B/PYK2. Interacts with GABARAP and GABARAPL1. Interacts with ATG16L1; the interaction is required for ULK1 complex-dependent autophagy. Interacts with RNF111, SKI and SMAD7. Interacts with COP1 in the cytoplasm of proliferating cells in response to UV stimulation. Interacts with TP53. Interacts with C9orf72. Interacts with WDR45B. Interacts with ATG13; this interaction is increased in the absence of TMEM39A. Interacts with WIPI2. Interacts with TAX1BP1. Interacts (via phosphorylated FFAT motif) with MOSPD2, VAPA and VAPB. In terms of processing, phosphorylation at Ser-734 of the FFAT motif activates interaction with MOSPD2, VAPA and VAPB. In terms of tissue distribution, expression levels correlated closely with those of RB1 in cancer cell lines as well as in various normal human tissues. Abundantly expressed in human musculoskeletal and cultured osteosarcoma cells.

The protein localises to the nucleus. It localises to the cytoplasm. The protein resides in the cytosol. Its subcellular location is the preautophagosomal structure. It is found in the lysosome. Its function is as follows. Involved in autophagy. Regulates early events but also late events of autophagosome formation through direct interaction with Atg16L1. Required for the formation of the autophagosome-like double-membrane structure that surrounds the Salmonella-containing vacuole (SCV) during S.typhimurium infection and subsequent xenophagy. Involved in repair of DNA damage caused by ionizing radiation, which subsequently improves cell survival by decreasing apoptosis. Inhibits PTK2/FAK1 and PTK2B/PYK2 kinase activity, affecting their downstream signaling pathways. Plays a role as a modulator of TGF-beta-signaling by restricting substrate specificity of RNF111. Functions as a DNA-binding transcription factor. Is a potent regulator of the RB1 pathway through induction of RB1 expression. Plays a crucial role in muscular differentiation. Plays an indispensable role in fetal hematopoiesis and in the regulation of neuronal homeostasis. The protein is RB1-inducible coiled-coil protein 1 of Homo sapiens (Human).